A 390-amino-acid chain; its full sequence is Glutamyl-tRNA reductase (390 aa).

Substrate contacts are provided by residues 46 to 49 (TCNR), serine 96, 101 to 103 (EAQ), and glutamine 107. Catalysis depends on cysteine 47, which acts as the Nucleophile. 176–181 (GAGEMA) lines the NADP(+) pocket.

It belongs to the glutamyl-tRNA reductase family. Homodimer.

The catalysed reaction is (S)-4-amino-5-oxopentanoate + tRNA(Glu) + NADP(+) = L-glutamyl-tRNA(Glu) + NADPH + H(+). The protein operates within porphyrin-containing compound metabolism; protoporphyrin-IX biosynthesis; 5-aminolevulinate from L-glutamyl-tRNA(Glu): step 1/2. Catalyzes the NADPH-dependent reduction of glutamyl-tRNA(Glu) to glutamate 1-semialdehyde (GSA). The polypeptide is Glutamyl-tRNA reductase (Thermus thermophilus (strain ATCC 27634 / DSM 579 / HB8)).